We begin with the raw amino-acid sequence, 337 residues long: Inositol 2-dehydrogenase (337 aa).

It belongs to the Gfo/Idh/MocA family. In terms of assembly, homotetramer.

The catalysed reaction is myo-inositol + NAD(+) = scyllo-inosose + NADH + H(+). Involved in the oxidation of myo-inositol (MI) to 2-keto-myo-inositol (2KMI or 2-inosose). The polypeptide is Inositol 2-dehydrogenase (Serratia proteamaculans (strain 568)).